The following is a 370-amino-acid chain: tRNA 2-selenouridine synthase (370 aa).

In terms of domain architecture, Rhodanese spans 12 to 136 (FLDDVPMMDM…MRTFLLETTQ (125 aa)). Catalysis depends on C95, which acts as the S-selanylcysteine intermediate.

The protein belongs to the SelU family. Monomer.

It catalyses the reaction 5-methylaminomethyl-2-thiouridine(34) in tRNA + selenophosphate + (2E)-geranyl diphosphate + H2O + H(+) = 5-methylaminomethyl-2-selenouridine(34) in tRNA + (2E)-thiogeraniol + phosphate + diphosphate. The catalysed reaction is 5-methylaminomethyl-2-thiouridine(34) in tRNA + (2E)-geranyl diphosphate = 5-methylaminomethyl-S-(2E)-geranyl-thiouridine(34) in tRNA + diphosphate. The enzyme catalyses 5-methylaminomethyl-S-(2E)-geranyl-thiouridine(34) in tRNA + selenophosphate + H(+) = 5-methylaminomethyl-2-(Se-phospho)selenouridine(34) in tRNA + (2E)-thiogeraniol. It carries out the reaction 5-methylaminomethyl-2-(Se-phospho)selenouridine(34) in tRNA + H2O = 5-methylaminomethyl-2-selenouridine(34) in tRNA + phosphate. Involved in the post-transcriptional modification of the uridine at the wobble position (U34) of tRNA(Lys), tRNA(Glu) and tRNA(Gln). Catalyzes the conversion of 2-thiouridine (S2U-RNA) to 2-selenouridine (Se2U-RNA). Acts in a two-step process involving geranylation of 2-thiouridine (S2U) to S-geranyl-2-thiouridine (geS2U) and subsequent selenation of the latter derivative to 2-selenouridine (Se2U) in the tRNA chain. The chain is tRNA 2-selenouridine synthase from Pseudomonas putida (strain GB-1).